The chain runs to 165 residues: Glutamyl-tRNA(Gln) amidotransferase subunit F, mitochondrial (165 aa).

Basic and acidic residues predominate over residues 137 to 153 (VSDQRGERGFDTSELRT). The segment at 137–165 (VSDQRGERGFDTSELRTRINRAKSTAEKE) is disordered.

Belongs to the GatF family. As to quaternary structure, subunit of the heterotrimeric GatFAB amidotransferase (AdT) complex, composed of A, B and F subunits.

Its subcellular location is the mitochondrion inner membrane. It carries out the reaction L-glutamyl-tRNA(Gln) + L-glutamine + ATP + H2O = L-glutaminyl-tRNA(Gln) + L-glutamate + ADP + phosphate + H(+). Its function is as follows. Allows the formation of correctly charged Gln-tRNA(Gln) through the transamidation of misacylated Glu-tRNA(Gln) in the mitochondria. The reaction takes place in the presence of glutamine and ATP through an activated gamma-phospho-Glu-tRNA(Gln). Required for proper protein synthesis within the mitochondrion. This is Glutamyl-tRNA(Gln) amidotransferase subunit F, mitochondrial from Clavispora lusitaniae (strain ATCC 42720) (Yeast).